Reading from the N-terminus, the 348-residue chain is Probable dual-specificity RNA methyltransferase RlmN (348 aa).

Glutamate 90 acts as the Proton acceptor in catalysis. The Radical SAM core domain maps to 96–324; it reads AAERLTVCVS…ASVRHTRGLE (229 aa). Residues cysteine 103 and cysteine 329 are joined by a disulfide bond. 3 residues coordinate [4Fe-4S] cluster: cysteine 110, cysteine 114, and cysteine 117. S-adenosyl-L-methionine-binding positions include 157 to 158, serine 187, 210 to 212, and asparagine 286; these read GE and SLH. Residue cysteine 329 is the S-methylcysteine intermediate of the active site.

Belongs to the radical SAM superfamily. RlmN family. The cofactor is [4Fe-4S] cluster.

It localises to the cytoplasm. It carries out the reaction adenosine(2503) in 23S rRNA + 2 reduced [2Fe-2S]-[ferredoxin] + 2 S-adenosyl-L-methionine = 2-methyladenosine(2503) in 23S rRNA + 5'-deoxyadenosine + L-methionine + 2 oxidized [2Fe-2S]-[ferredoxin] + S-adenosyl-L-homocysteine. The catalysed reaction is adenosine(37) in tRNA + 2 reduced [2Fe-2S]-[ferredoxin] + 2 S-adenosyl-L-methionine = 2-methyladenosine(37) in tRNA + 5'-deoxyadenosine + L-methionine + 2 oxidized [2Fe-2S]-[ferredoxin] + S-adenosyl-L-homocysteine. Its function is as follows. Specifically methylates position 2 of adenine 2503 in 23S rRNA and position 2 of adenine 37 in tRNAs. This chain is Probable dual-specificity RNA methyltransferase RlmN, found in Gloeobacter violaceus (strain ATCC 29082 / PCC 7421).